The sequence spans 181 residues: Crossover junction endodeoxyribonuclease RuvC (181 aa).

Residues Asp7, Glu67, and Asp139 contribute to the active site. Mg(2+) contacts are provided by Asp7, Glu67, and Asp139.

This sequence belongs to the RuvC family. Homodimer which binds Holliday junction (HJ) DNA. The HJ becomes 2-fold symmetrical on binding to RuvC with unstacked arms; it has a different conformation from HJ DNA in complex with RuvA. In the full resolvosome a probable DNA-RuvA(4)-RuvB(12)-RuvC(2) complex forms which resolves the HJ. Mg(2+) serves as cofactor.

Its subcellular location is the cytoplasm. The catalysed reaction is Endonucleolytic cleavage at a junction such as a reciprocal single-stranded crossover between two homologous DNA duplexes (Holliday junction).. Its function is as follows. The RuvA-RuvB-RuvC complex processes Holliday junction (HJ) DNA during genetic recombination and DNA repair. Endonuclease that resolves HJ intermediates. Cleaves cruciform DNA by making single-stranded nicks across the HJ at symmetrical positions within the homologous arms, yielding a 5'-phosphate and a 3'-hydroxyl group; requires a central core of homology in the junction. The consensus cleavage sequence is 5'-(A/T)TT(C/G)-3'. Cleavage occurs on the 3'-side of the TT dinucleotide at the point of strand exchange. HJ branch migration catalyzed by RuvA-RuvB allows RuvC to scan DNA until it finds its consensus sequence, where it cleaves and resolves the cruciform DNA. This chain is Crossover junction endodeoxyribonuclease RuvC, found in Cupriavidus taiwanensis (strain DSM 17343 / BCRC 17206 / CCUG 44338 / CIP 107171 / LMG 19424 / R1) (Ralstonia taiwanensis (strain LMG 19424)).